Reading from the N-terminus, the 197-residue chain is uncharacterized protein (197 aa).

A helical transmembrane segment spans residues 11 to 31 (ICGFSLVALTIAGIVGGVYLV).

It localises to the membrane. This is an uncharacterized protein from Mycoplasma pneumoniae (strain ATCC 29342 / M129 / Subtype 1) (Mycoplasmoides pneumoniae).